The chain runs to 268 residues: Proteasome subunit beta type-4 (268 aa).

It belongs to the peptidase T1B family. In terms of assembly, the 26S proteasome consists of a 20S proteasome core and two 19S regulatory subunits. The 20S proteasome core is composed of 28 subunits that are arranged in four stacked rings, resulting in a barrel-shaped structure. The two end rings are each formed by seven alpha subunits, and the two central rings are each formed by seven beta subunits. The catalytic chamber with the active sites is on the inside of the barrel.

It localises to the cytoplasm. The protein resides in the nucleus. Non-catalytic component of the proteasome, a multicatalytic proteinase complex which is characterized by its ability to cleave peptides with Arg, Phe, Tyr, Leu, and Glu adjacent to the leaving group at neutral or slightly basic pH. The proteasome has an ATP-dependent proteolytic activity. The polypeptide is Proteasome subunit beta type-4 (Prosbeta7) (Drosophila melanogaster (Fruit fly)).